The chain runs to 347 residues: Phosphate acyltransferase (347 aa).

It belongs to the PlsX family. In terms of assembly, homodimer. Probably interacts with PlsY.

It localises to the cytoplasm. The catalysed reaction is a fatty acyl-[ACP] + phosphate = an acyl phosphate + holo-[ACP]. The protein operates within lipid metabolism; phospholipid metabolism. Catalyzes the reversible formation of acyl-phosphate (acyl-PO(4)) from acyl-[acyl-carrier-protein] (acyl-ACP). This enzyme utilizes acyl-ACP as fatty acyl donor, but not acyl-CoA. The chain is Phosphate acyltransferase from Lawsonia intracellularis (strain PHE/MN1-00).